Reading from the N-terminus, the 1071-residue chain is V-type proton ATPase catalytic subunit A (1071 aa).

At Ala-2 the chain carries N-acetylalanine. Position 131 is a phosphothreonine (Thr-131). Position 257–264 (257–264) interacts with ATP; sequence GAFGCGKT. One can recognise a DOD-type homing endonuclease domain in the interval 494 to 642; that stretch reads LLGLWIGDGL…LVSLARSLGL (149 aa). Residues Ser-858 and Ser-928 each carry the phosphoserine modification.

It belongs to the ATPase alpha/beta chains family. In terms of assembly, V-ATPase is a heteromultimeric enzyme composed of a peripheral catalytic V1 complex (components A to H) attached to an integral membrane V0 proton pore complex (components: a, c, c', c'', d, e, f and VOA1). Interacts with RAV1 and RAV2 components of the RAVE complex, which are essential for the stability and assembly of V-ATPase. This protein undergoes a protein self splicing that involves a post-translational excision of the VDE intervening region (intein) followed by peptide ligation.

The protein resides in the vacuole membrane. It catalyses the reaction ATP + H2O + 4 H(+)(in) = ADP + phosphate + 5 H(+)(out). Functionally, catalytic subunit of the V1 complex of vacuolar(H+)-ATPase (V-ATPase), a multisubunit enzyme composed of a peripheral complex (V1) that hydrolyzes ATP and a membrane integral complex (V0) that translocates protons. V-ATPase is responsible for acidifying and maintaining the pH of intracellular compartments. PI-SceI is an endonuclease that can cleave at a site present in a VMA1 allele that lacks the derived endonuclease segment of the open reading frame; cleavage at this site only occurs during meiosis and initiates 'homing', a genetic event that converts a VMA1 allele lacking VDE into one that contains it. In Saccharomyces cerevisiae (strain ATCC 204508 / S288c) (Baker's yeast), this protein is V-type proton ATPase catalytic subunit A.